The sequence spans 120 residues: MIMPQTRLVVADNTGAKEIMCFRILGKKKVAQVGDIIVASVKEAVPRSNIKKGDVVYAVVIRTKRTIKRKDGSCVRFDDNAAVIIDKEGNPRGTRVFGPVARELRDKNFMKIISLATEVI.

It belongs to the universal ribosomal protein uL14 family. In terms of assembly, part of the 50S ribosomal subunit. Forms a cluster with proteins L3 and L19. In the 70S ribosome, L14 and L19 interact and together make contacts with the 16S rRNA in bridges B5 and B8.

Its function is as follows. Binds to 23S rRNA. Forms part of two intersubunit bridges in the 70S ribosome. The polypeptide is Large ribosomal subunit protein uL14 (Dictyoglomus turgidum (strain DSM 6724 / Z-1310)).